Here is a 206-residue protein sequence, read N- to C-terminus: Recombination protein RecR (206 aa).

The C4-type zinc-finger motif lies at 58 to 73; that stretch reads CNICGYITEKNICNFC. The Toprim domain occupies 81 to 178; that stretch reads STIMIVADNR…KITKLAYGIP (98 aa).

Belongs to the RecR family.

In terms of biological role, may play a role in DNA repair. It seems to be involved in an RecBC-independent recombinational process of DNA repair. It may act with RecF and RecO. This is Recombination protein RecR from Phytoplasma mali (strain AT).